Consider the following 44-residue polypeptide: Photosystem I reaction center subunit IX (44 aa).

A helical membrane pass occupies residues 9–29 (YMRSAPVVAAAWITMTAGIII).

Belongs to the PsaJ family.

The protein resides in the cellular thylakoid membrane. Its function is as follows. May help in the organization of the PsaE and PsaF subunits. The chain is Photosystem I reaction center subunit IX from Prochlorococcus marinus (strain MIT 9312).